Here is a 444-residue protein sequence, read N- to C-terminus: Maltoporin (444 aa).

The N-terminal stretch at 1 to 24 is a signal peptide; sequence MITLRKVPLALAIAAGILSAQAGA.

This sequence belongs to the porin LamB (TC 1.B.3) family. As to quaternary structure, homotrimer formed of three 18-stranded antiparallel beta-barrels, containing three independent channels.

Its subcellular location is the cell outer membrane. The catalysed reaction is beta-maltose(in) = beta-maltose(out). Its function is as follows. Involved in the transport of maltose and maltodextrins. In Enterobacter sp. (strain 638), this protein is Maltoporin.